The following is a 239-amino-acid chain: Ribosomal RNA small subunit methyltransferase A (239 aa).

Residues Asn-23, Ile-25, Gly-50, Glu-72, Asp-97, and Asn-116 each contribute to the S-adenosyl-L-methionine site.

This sequence belongs to the class I-like SAM-binding methyltransferase superfamily. rRNA adenine N(6)-methyltransferase family. RsmA subfamily.

It localises to the cytoplasm. It catalyses the reaction adenosine(1518)/adenosine(1519) in 16S rRNA + 4 S-adenosyl-L-methionine = N(6)-dimethyladenosine(1518)/N(6)-dimethyladenosine(1519) in 16S rRNA + 4 S-adenosyl-L-homocysteine + 4 H(+). In terms of biological role, specifically dimethylates two adjacent adenosines (A1518 and A1519) in the loop of a conserved hairpin near the 3'-end of 16S rRNA in the 30S particle. May play a critical role in biogenesis of 30S subunits. This Rickettsia felis (strain ATCC VR-1525 / URRWXCal2) (Rickettsia azadi) protein is Ribosomal RNA small subunit methyltransferase A.